Here is a 321-residue protein sequence, read N- to C-terminus: Nucleotide-binding protein GOX0815 (321 aa).

27–34 (GLSGAGKS) is an ATP binding site. 72–75 (DVRS) contacts GTP.

It belongs to the RapZ-like family.

Functionally, displays ATPase and GTPase activities. The chain is Nucleotide-binding protein GOX0815 from Gluconobacter oxydans (strain 621H) (Gluconobacter suboxydans).